A 471-amino-acid chain; its full sequence is MSHVPPHVPFELSGAELRDAIVQYATNPIYHDNLDWLNHDNPYRRQLRPQVLPHLDYDKVPGRENILNYASLAVQRLLTSVYEADLVFFPKSGLKGKEEDFRAFYSPANRALGERIRPALERYAFGFLDDEVETSGTWTAQSLDAYLDSLDTAGGAEQSPVEKAILGSADRERAARMWLVQFAPDFLSEASPMMRNVLGYYGPAQSEWFKVVIDEYGYGVHDTKHSTLFERTLESVGLESDLHRYWQYYLNSSLLLNNYFHYLGKNHELFFRYVGALYYTESSLVDFCRRADHLLREVFGDTVDTTYFTEHIHIDQHHGRMAREKIIKPLVEAHGDGIIPEIVRGIEEYRVLLEIGDFDFSEQIAWMDAQPELKKLHDPVFEGLKQGKVDAPVAHLVEPRGELSNTHCHDGDELCHIVSGTMRFESGLGSSLTLQAGEGVVIKRNRLHGANIESDECVYEIHSVGDYRKCL.

The HO-like stretch occupies residues 177 to 328 (MWLVQFAPDF…GRMAREKIIK (152 aa)). Positions 189, 215, 225, 281, 311, 315, 318, 407, 409, and 448 each coordinate Fe(2+). Residues 397–459 (VEPRGELSNT…ANIESDECVY (63 aa)) are cupin.

In terms of assembly, homodimer. It depends on Fe(2+) as a cofactor.

It catalyses the reaction N(omega)-methyl-L-arginine + 2 NADH + 3 O2 + H(+) = N(delta)-hydroxy-N(omega)-methyl-N(omega)-nitroso-L-citrulline + 2 NAD(+) + 3 H2O. The enzyme catalyses N(omega)-methyl-L-arginine + NADH + O2 + H(+) = N(delta)-hydroxy-N(omega)-methyl-L-arginine + NAD(+) + H2O. It carries out the reaction N(delta)-hydroxy-N(omega)-methyl-L-arginine + NADH + O2 = N(delta),N(omega')-dihydroxy-N(omega)-methyl-L-arginine + NAD(+) + H2O. The catalysed reaction is N(delta),N(omega')-dihydroxy-N(omega)-methyl-L-arginine + O2 = N(delta)-hydroxy-N(omega)-methyl-N(omega)-nitroso-L-citrulline + H2O. It catalyses the reaction 2 N(delta)-hydroxy-N(omega)-methyl-N(omega)-nitroso-L-citrulline + AH2 = 2 N(delta)-hydroxy-N(omega)-methyl-L-citrulline + 2 nitric oxide + A. Its pathway is antibiotic biosynthesis. Involved in the biosynthesis of the glucosamine-nitrosourea antibiotic streptozotocin (SZN). Catalyzes a complex multi-step reaction: the overall reaction is an oxidative rearrangement of the guanidine group of N(omega)-methyl-L-arginine (L-NMA), generating an N-nitrosourea product. SznF first hydroxylates L-NMA to form N(delta)-hydroxy-N(omega)-methyl-L-arginine (L-HMA), which is further hydroxylated to give N(delta)-hydroxy-N(omega)-hydroxy-N(omega)-methyl-L-arginine (L-DHMA). Subsequently, an oxidative rearrangement converts this intermediate to N(delta)-hydroxy-N(omega)-methyl-N(omega)-nitroso-L-citrulline. This product is unstable, and degrades non-enzymically into nitric oxide and the denitrosated product N(delta)-hydroxy-N(omega)-methyl-L-citrulline. The sequence is that of Nitrosourea synthase from Streptomyces achromogenes subsp. streptozoticus.